Consider the following 537-residue polypeptide: CTP synthase (537 aa).

The amidoligase domain stretch occupies residues 1 to 268; it reads MSFKCIFLTG…STFITEKLGL (268 aa). Residue serine 14 coordinates CTP. Serine 14 is a binding site for UTP. Position 15–20 (15–20) interacts with ATP; the sequence is SLGKGL. An L-glutamine-binding site is contributed by tyrosine 55. Aspartate 72 serves as a coordination point for ATP. 2 residues coordinate Mg(2+): aspartate 72 and glutamate 142. CTP-binding positions include 149–151, 188–193, and lysine 224; these read DIE and KTKPTQ. UTP contacts are provided by residues 188-193 and lysine 224; that span reads KTKPTQ. The Glutamine amidotransferase type-1 domain maps to 294–533; it reads RLGLVGKYVQ…IEAALLHSRN (240 aa). Residue glycine 353 coordinates L-glutamine. The Nucleophile; for glutamine hydrolysis role is filled by cysteine 380. L-glutamine-binding positions include 381 to 384, glutamate 404, and arginine 461; that span reads LGMQ. Catalysis depends on residues histidine 506 and glutamate 508.

The protein belongs to the CTP synthase family. As to quaternary structure, homotetramer.

The catalysed reaction is UTP + L-glutamine + ATP + H2O = CTP + L-glutamate + ADP + phosphate + 2 H(+). The enzyme catalyses L-glutamine + H2O = L-glutamate + NH4(+). It catalyses the reaction UTP + NH4(+) + ATP = CTP + ADP + phosphate + 2 H(+). It participates in pyrimidine metabolism; CTP biosynthesis via de novo pathway; CTP from UDP: step 2/2. With respect to regulation, allosterically activated by GTP, when glutamine is the substrate; GTP has no effect on the reaction when ammonia is the substrate. The allosteric effector GTP functions by stabilizing the protein conformation that binds the tetrahedral intermediate(s) formed during glutamine hydrolysis. Inhibited by the product CTP, via allosteric rather than competitive inhibition. Functionally, catalyzes the ATP-dependent amination of UTP to CTP with either L-glutamine or ammonia as the source of nitrogen. Regulates intracellular CTP levels through interactions with the four ribonucleotide triphosphates. This is CTP synthase from Chlamydia abortus (strain DSM 27085 / S26/3) (Chlamydophila abortus).